Consider the following 348-residue polypeptide: Guanosine ABC transporter permease protein NupP (348 aa).

Transmembrane regions (helical) follow at residues 8-28 (LLVPLIAIILGLAAGALIMLV), 61-81 (YILSGLAVAFAFRTGLFNIGV), 85-105 (LLVGWTAAVWVGTAFDGPAYI), 107-127 (LPLALITAAAAGGLWGFIPGI), 136-156 (EVIVTIMMNYIALHMTNYIIS), 189-209 (LHLGIIVALLAAVIMWFIINK), 237-257 (IMTSMLISGAFAGLAGAMEGL), 277-297 (IAVALLGGNTAVGVVLAACLL), and 320-340 (IVIAIIILFVASSYAIRFVMG).

Belongs to the binding-protein-dependent transport system permease family. The complex is composed of two ATP-binding proteins (NupO), two transmembrane proteins (NupP and NupQ) and a solute-binding protein (NupN).

The protein resides in the cell membrane. Functionally, part of an ABC transporter complex involved in the uptake of guanosine. Responsible for the translocation of the substrate across the membrane. May be a nucleoside transporter of broad specificity but with various affinities for different substrates. In Bacillus subtilis (strain 168), this protein is Guanosine ABC transporter permease protein NupP.